Reading from the N-terminus, the 310-residue chain is Zinc finger CCCH domain-containing protein 14 (310 aa).

Positions 56–75 (ESLSPSPPSSSSPPSRVDTT) are disordered. A coiled-coil region spans residues 84–129 (KLILEYDELNEHYELCLNRLQSLMTELDSLRHENDSLRFENSDLLK). The span at 155 to 167 (QISDSRSAKRNNQ) shows a compositional bias: basic and acidic residues. Positions 155–174 (QISDSRSAKRNNQERNSLPK) are disordered. C3H1-type zinc fingers lie at residues 232-260 (MMKT…HGID) and 270-298 (RYKT…HSLT).

Highly expressed in secondary cell wall-forming tissues and the xylem cells of roots. Expressed predominantly in inflorescence stems, flowers and siliques. Highly expressed in the basal portion of stems, where cells are undergoing secondary cell wall thickening.

Functionally, functions probably as a transcriptional factor that activates genes involved in secondary cell wall biosynthesis. May play a role in both transcriptional and post-transcriptional regulation. Binds to ssDNA, dsDNA, and ribohomopolymers in vitro. Maybe involved in post-transcriptional regulation of its target genes. Targets RNA of a polygalacturonase, a well-known cell wall modifying gene. Functions redudantly with C3H15 to regulate secondary cell wall formation. C3H14 and C3H15 have overlapping roles in the regulation of secondary cell wall formation and anther development. C3H14 may contribute more to secondary cell wall thickening while C3H15 could be more important in anther development. May regulate at both the transcriptional and post-transcriptional levels the expression of many genes involved in various biological processes, particularly those associated with cell wall metabolism and pollen development. The polypeptide is Zinc finger CCCH domain-containing protein 14 (Arabidopsis thaliana (Mouse-ear cress)).